The sequence spans 423 residues: Putative competence-damage inducible protein (423 aa).

The protein belongs to the CinA family.

This Streptococcus pyogenes serotype M18 (strain MGAS8232) protein is Putative competence-damage inducible protein.